Consider the following 761-residue polypeptide: Phosphoribosylformylglycinamidine synthase subunit PurL (761 aa).

His49 is an active-site residue. Tyr52 and Lys92 together coordinate ATP. Glu94 lines the Mg(2+) pocket. Substrate-binding positions include 95 to 98 and Arg117; that span reads SHNH. The Proton acceptor role is filled by His96. Asp118 lines the Mg(2+) pocket. Gln241 provides a ligand contact to substrate. Asp269 contributes to the Mg(2+) binding site. 318–320 contacts substrate; it reads ESQ. ATP is bound by residues Asn502 and Gly539. Asn540 contacts Mg(2+). Ser542 provides a ligand contact to substrate.

This sequence belongs to the FGAMS family. As to quaternary structure, monomer. Part of the FGAM synthase complex composed of 1 PurL, 1 PurQ and 2 PurS subunits.

Its subcellular location is the cytoplasm. The catalysed reaction is N(2)-formyl-N(1)-(5-phospho-beta-D-ribosyl)glycinamide + L-glutamine + ATP + H2O = 2-formamido-N(1)-(5-O-phospho-beta-D-ribosyl)acetamidine + L-glutamate + ADP + phosphate + H(+). It functions in the pathway purine metabolism; IMP biosynthesis via de novo pathway; 5-amino-1-(5-phospho-D-ribosyl)imidazole from N(2)-formyl-N(1)-(5-phospho-D-ribosyl)glycinamide: step 1/2. Part of the phosphoribosylformylglycinamidine synthase complex involved in the purines biosynthetic pathway. Catalyzes the ATP-dependent conversion of formylglycinamide ribonucleotide (FGAR) and glutamine to yield formylglycinamidine ribonucleotide (FGAM) and glutamate. The FGAM synthase complex is composed of three subunits. PurQ produces an ammonia molecule by converting glutamine to glutamate. PurL transfers the ammonia molecule to FGAR to form FGAM in an ATP-dependent manner. PurS interacts with PurQ and PurL and is thought to assist in the transfer of the ammonia molecule from PurQ to PurL. The protein is Phosphoribosylformylglycinamidine synthase subunit PurL of Chlorobium chlorochromatii (strain CaD3).